Reading from the N-terminus, the 428-residue chain is Putative G-protein coupled receptor F59B2.13 (428 aa).

Residues 1-30 (MSNNTTIPSKTATDICLTDRQMSLSVSSTE) lie on the Extracellular side of the membrane. N-linked (GlcNAc...) asparagine glycosylation is found at asparagine 3 and asparagine 4. The helical transmembrane segment at 31 to 51 (GVLIGTIIPILVLFGISGNIL) threads the bilayer. At 52 to 67 (NLTVLLAPNLRTRSNQ) the chain is on the cytoplasmic side. A helical transmembrane segment spans residues 68-88 (LLACLAVADIVSLVVILPHSM). The Extracellular segment spans residues 89–110 (AHYETFETALWFRKFYGKYKFQ). Residues 111-131 (IIAMTNWSIATATWLVFVICL) traverse the membrane as a helical segment. The Cytoplasmic segment spans residues 132 to 154 (ERLIIIKYPLSVRKQAKFFTPRN). A helical transmembrane segment spans residues 155–175 (VVTIIVVTTFILTSYNHVSHA). Topologically, residues 176–222 (CAEKLFCNGTQYHVACLGIDSERWFRNEPNPNSEFMKSVVRVAPQVN) are extracellular. N-linked (GlcNAc...) asparagine glycosylation is present at asparagine 183. The helical transmembrane segment at 223 to 243 (AIFVVLIPVVLVIIFNVMLIL) threads the bilayer. The Cytoplasmic portion of the chain corresponds to 244-278 (TLRQRTKLFEPSKTIRGDSQFTQLQSKTEHKVTIT). Residues 279-299 (VTAIVTCFTITQSPSAFVTFL) traverse the membrane as a helical segment. The Extracellular portion of the chain corresponds to 300–309 (SSYVHRDWVT). The helical transmembrane segment at 310-330 (LSAICTILVVLGKALNFVLFC) threads the bilayer. Topologically, residues 331-428 (LSSASFRQRL…KEFRRGTSFV (98 aa)) are cytoplasmic.

It belongs to the G-protein coupled receptor 1 family.

It is found in the cell membrane. This is Putative G-protein coupled receptor F59B2.13 from Caenorhabditis elegans.